A 309-amino-acid polypeptide reads, in one-letter code: Homoserine kinase (309 aa).

Proline 91–cysteine 101 contributes to the ATP binding site.

This sequence belongs to the GHMP kinase family. Homoserine kinase subfamily.

Its subcellular location is the cytoplasm. The catalysed reaction is L-homoserine + ATP = O-phospho-L-homoserine + ADP + H(+). Its pathway is amino-acid biosynthesis; L-threonine biosynthesis; L-threonine from L-aspartate: step 4/5. Functionally, catalyzes the ATP-dependent phosphorylation of L-homoserine to L-homoserine phosphate. The sequence is that of Homoserine kinase from Buchnera aphidicola subsp. Acyrthosiphon pisum (strain APS) (Acyrthosiphon pisum symbiotic bacterium).